A 494-amino-acid polypeptide reads, in one-letter code: 3-octaprenyl-4-hydroxybenzoate carboxy-lyase (494 aa).

N172 is a binding site for Mn(2+). Residues 175–177, 189–191, and 194–195 each bind prenylated FMN; these read IYR, RWL, and RG. E238 provides a ligand contact to Mn(2+). The active-site Proton donor is D287.

Belongs to the UbiD family. As to quaternary structure, homohexamer. The cofactor is prenylated FMN. Mn(2+) is required as a cofactor.

The protein localises to the cell membrane. The enzyme catalyses a 4-hydroxy-3-(all-trans-polyprenyl)benzoate + H(+) = a 2-(all-trans-polyprenyl)phenol + CO2. It functions in the pathway cofactor biosynthesis; ubiquinone biosynthesis. Catalyzes the decarboxylation of 3-octaprenyl-4-hydroxy benzoate to 2-octaprenylphenol, an intermediate step in ubiquinone biosynthesis. The chain is 3-octaprenyl-4-hydroxybenzoate carboxy-lyase from Erwinia tasmaniensis (strain DSM 17950 / CFBP 7177 / CIP 109463 / NCPPB 4357 / Et1/99).